The following is a 349-amino-acid chain: Inhibitor of nuclear factor kappa-B kinase-interacting protein (349 aa).

The span at 1-11 (MSEVKSRKKSG) shows a compositional bias: basic residues. The segment at 1 to 39 (MSEVKSRKKSGTKGAPAEPGKRNEGGKSPEARGGGGRGW) is disordered. Over residues 19-30 (PGKRNEGGKSPE) the composition is skewed to basic and acidic residues. The helical transmembrane segment at 45–61 (GVSLLSLGTCLGLAWFV) threads the bilayer. N-linked (GlcNAc...) asparagine glycosylation is present at asparagine 145. Coiled coils occupy residues 183-216 (GLVTDVTSLTDSVQELENKIEKVEKNTVKNIGDL) and 304-347 (IGRL…HISD). Asparagine 327 is a glycosylation site (N-linked (GlcNAc...) asparagine).

In terms of processing, N-glycosylated.

Its subcellular location is the endoplasmic reticulum membrane. Functionally, target of p53/TP53 with pro-apoptotic function. This chain is Inhibitor of nuclear factor kappa-B kinase-interacting protein (IKBIP), found in Bos taurus (Bovine).